A 277-amino-acid chain; its full sequence is Genetic interactor of prohibitin 5, mitochondrial (277 aa).

It belongs to the GEP5 family.

It is found in the mitochondrion. Essential for respiratory growth and required for maintenance of mtDNA. Required for cell survival in the absence of prohibitins. This is Genetic interactor of prohibitin 5, mitochondrial (GEP5) from Zygosaccharomyces rouxii (strain ATCC 2623 / CBS 732 / NBRC 1130 / NCYC 568 / NRRL Y-229).